A 262-amino-acid polypeptide reads, in one-letter code: Acyl-[acyl-carrier-protein]--UDP-N-acetylglucosamine O-acyltransferase (262 aa).

This sequence belongs to the transferase hexapeptide repeat family. LpxA subfamily. In terms of assembly, homotrimer.

It is found in the cytoplasm. The catalysed reaction is a (3R)-hydroxyacyl-[ACP] + UDP-N-acetyl-alpha-D-glucosamine = a UDP-3-O-[(3R)-3-hydroxyacyl]-N-acetyl-alpha-D-glucosamine + holo-[ACP]. It participates in glycolipid biosynthesis; lipid IV(A) biosynthesis; lipid IV(A) from (3R)-3-hydroxytetradecanoyl-[acyl-carrier-protein] and UDP-N-acetyl-alpha-D-glucosamine: step 1/6. Functionally, involved in the biosynthesis of lipid A, a phosphorylated glycolipid that anchors the lipopolysaccharide to the outer membrane of the cell. The sequence is that of Acyl-[acyl-carrier-protein]--UDP-N-acetylglucosamine O-acyltransferase from Salmonella arizonae (strain ATCC BAA-731 / CDC346-86 / RSK2980).